The chain runs to 128 residues: ADA histone acetyltransferase complex component 2 (128 aa).

It is found in the cytoplasm. It localises to the nucleus. The protein is ADA histone acetyltransferase complex component 2 (AHC2) of Saccharomyces cerevisiae (strain ATCC 204508 / S288c) (Baker's yeast).